A 466-amino-acid polypeptide reads, in one-letter code: Cysteine--tRNA ligase (466 aa).

Zn(2+) is bound at residue Cys-27. The 'HIGH' region signature appears at 29 to 39; the sequence is PTVYDDAHLGH. Zn(2+) contacts are provided by Cys-208, His-238, and Glu-242. The 'KMSKS' region signature appears at 270–274; the sequence is KMSKS. Lys-273 serves as a coordination point for ATP.

This sequence belongs to the class-I aminoacyl-tRNA synthetase family. As to quaternary structure, monomer. Requires Zn(2+) as cofactor.

Its subcellular location is the cytoplasm. It carries out the reaction tRNA(Cys) + L-cysteine + ATP = L-cysteinyl-tRNA(Cys) + AMP + diphosphate. This chain is Cysteine--tRNA ligase, found in Sulfurimonas denitrificans (strain ATCC 33889 / DSM 1251) (Thiomicrospira denitrificans (strain ATCC 33889 / DSM 1251)).